We begin with the raw amino-acid sequence, 264 residues long: Thymidylate synthase (264 aa).

R21 is a dUMP binding site. H51 provides a ligand contact to (6R)-5,10-methylene-5,6,7,8-tetrahydrofolate. 126 to 127 (RR) is a dUMP binding site. The active-site Nucleophile is C146. DUMP contacts are provided by residues 166–169 (RSAD), N177, and 207–209 (HIY). D169 is a binding site for (6R)-5,10-methylene-5,6,7,8-tetrahydrofolate. A263 provides a ligand contact to (6R)-5,10-methylene-5,6,7,8-tetrahydrofolate.

This sequence belongs to the thymidylate synthase family. Bacterial-type ThyA subfamily. Homodimer.

It is found in the cytoplasm. It carries out the reaction dUMP + (6R)-5,10-methylene-5,6,7,8-tetrahydrofolate = 7,8-dihydrofolate + dTMP. It participates in pyrimidine metabolism; dTTP biosynthesis. Functionally, catalyzes the reductive methylation of 2'-deoxyuridine-5'-monophosphate (dUMP) to 2'-deoxythymidine-5'-monophosphate (dTMP) while utilizing 5,10-methylenetetrahydrofolate (mTHF) as the methyl donor and reductant in the reaction, yielding dihydrofolate (DHF) as a by-product. This enzymatic reaction provides an intracellular de novo source of dTMP, an essential precursor for DNA biosynthesis. This Parabacteroides distasonis (strain ATCC 8503 / DSM 20701 / CIP 104284 / JCM 5825 / NCTC 11152) protein is Thymidylate synthase.